The primary structure comprises 173 residues: Mediator of RNA polymerase II transcription subunit 10 (173 aa).

Residues 1–20 show a composition bias toward polar residues; sequence MDPNSPMFQNTPQQPMSLQR. The tract at residues 1 to 45 is disordered; it reads MDPNSPMFQNTPQQPMSLQRSVDDRIDRERTAKKEKDDEKKKQED. Residues 21-45 are compositionally biased toward basic and acidic residues; it reads SVDDRIDRERTAKKEKDDEKKKQED.

Belongs to the Mediator complex subunit 10 family. As to quaternary structure, component of the Mediator complex.

It is found in the nucleus. Its function is as follows. Component of the Mediator complex, a coactivator involved in the regulated transcription of nearly all RNA polymerase II-dependent genes. Mediator functions as a bridge to convey information from gene-specific regulatory proteins to the basal RNA polymerase II transcription machinery. Mediator is recruited to promoters by direct interactions with regulatory proteins and serves as a scaffold for the assembly of a functional preinitiation complex with RNA polymerase II and the general transcription factors. In Caenorhabditis briggsae, this protein is Mediator of RNA polymerase II transcription subunit 10 (mdt-10).